The sequence spans 457 residues: NADP-specific glutamate dehydrogenase (457 aa).

The active site involves Lys-111.

It belongs to the Glu/Leu/Phe/Val dehydrogenases family. Homohexamer.

The enzyme catalyses L-glutamate + NADP(+) + H2O = 2-oxoglutarate + NH4(+) + NADPH + H(+). This chain is NADP-specific glutamate dehydrogenase (gdhA), found in Agaricus bisporus (White button mushroom).